Here is a 679-residue protein sequence, read N- to C-terminus: Glycine--tRNA ligase beta subunit (679 aa).

The protein belongs to the class-II aminoacyl-tRNA synthetase family. In terms of assembly, tetramer of two alpha and two beta subunits.

The protein localises to the cytoplasm. It carries out the reaction tRNA(Gly) + glycine + ATP = glycyl-tRNA(Gly) + AMP + diphosphate. The protein is Glycine--tRNA ligase beta subunit of Streptococcus pyogenes serotype M3 (strain ATCC BAA-595 / MGAS315).